Consider the following 374-residue polypeptide: Anhydro-N-acetylmuramic acid kinase (374 aa).

An ATP-binding site is contributed by 12–19 (GTSLDGVD).

This sequence belongs to the anhydro-N-acetylmuramic acid kinase family.

The catalysed reaction is 1,6-anhydro-N-acetyl-beta-muramate + ATP + H2O = N-acetyl-D-muramate 6-phosphate + ADP + H(+). It functions in the pathway amino-sugar metabolism; 1,6-anhydro-N-acetylmuramate degradation. The protein operates within cell wall biogenesis; peptidoglycan recycling. Its function is as follows. Catalyzes the specific phosphorylation of 1,6-anhydro-N-acetylmuramic acid (anhMurNAc) with the simultaneous cleavage of the 1,6-anhydro ring, generating MurNAc-6-P. Is required for the utilization of anhMurNAc either imported from the medium or derived from its own cell wall murein, and thus plays a role in cell wall recycling. The chain is Anhydro-N-acetylmuramic acid kinase from Salmonella arizonae (strain ATCC BAA-731 / CDC346-86 / RSK2980).